An 868-amino-acid polypeptide reads, in one-letter code: DNA replication licensing factor MCM2 (868 aa).

Disordered stretches follow at residues 1 to 65 (MSDN…DEVE) and 87 to 106 (NRDR…ELSL). A phosphoserine mark is found at S14, S16, and S23. Acidic residues predominate over residues 49–65 (EGDDNEVDDVPDIDEVE). Residues S164 and S170 each carry the phosphoserine modification. The segment at 341–367 (CLKCGSILGPFFQDSNEEIRISFCTNC) adopts a C4-type zinc-finger fold. The region spanning 493 to 700 (IIDKIISSMA…ADERLATFVV (208 aa)) is the MCM domain. Position 543 to 550 (543 to 550 (GDPGTAKS)) interacts with ATP. The Arginine finger signature appears at 675–678 (SRFD). Residues 704–728 (VRSHPENDEDREGEELKNNGESAIE) form a disordered region.

This sequence belongs to the MCM family. As to quaternary structure, component of the MCM2-7 complex. The complex forms a toroidal hexameric ring with the proposed subunit order MCM2-MCM6-MCM4-MCM7-MCM3-MCM5; loaded onto DNA, forms a head-head double hexamer.

It is found in the nucleus. It carries out the reaction ATP + H2O = ADP + phosphate + H(+). Functionally, acts as a component of the MCM2-7 complex (MCM complex) which is the putative replicative helicase essential for 'once per cell cycle' DNA replication initiation and elongation in eukaryotic cells. The active ATPase sites in the MCM2-7 ring are formed through the interaction surfaces of two neighboring subunits such that a critical structure of a conserved arginine finger motif is provided in trans relative to the ATP-binding site of the Walker A box of the adjacent subunit. The six ATPase active sites, however, are likely to contribute differentially to the complex helicase activity; specifically the MCM2-MCM5 association is proposed to be reversible and to mediate a open ring conformation which may facilitate DNA loading. Once loaded onto DNA, double hexamers can slide on dsDNA in the absence of ATPase activity. Necessary for cell growth. The protein is DNA replication licensing factor MCM2 (MCM2) of Saccharomyces cerevisiae (strain ATCC 204508 / S288c) (Baker's yeast).